A 159-amino-acid chain; its full sequence is Ribosomal RNA large subunit methyltransferase H (159 aa).

S-adenosyl-L-methionine contacts are provided by residues Leu-76, Gly-108, and 127-132; that span reads FSKMTF.

This sequence belongs to the RNA methyltransferase RlmH family. As to quaternary structure, homodimer.

It localises to the cytoplasm. The enzyme catalyses pseudouridine(1915) in 23S rRNA + S-adenosyl-L-methionine = N(3)-methylpseudouridine(1915) in 23S rRNA + S-adenosyl-L-homocysteine + H(+). Functionally, specifically methylates the pseudouridine at position 1915 (m3Psi1915) in 23S rRNA. This chain is Ribosomal RNA large subunit methyltransferase H, found in Geobacillus kaustophilus (strain HTA426).